The primary structure comprises 1511 residues: ATP-dependent permease PDR12 (1511 aa).

The span at 1 to 21 (MSSTDEHIEKDISSRSNHDDD) shows a compositional bias: basic and acidic residues. The tract at residues 1–37 (MSSTDEHIEKDISSRSNHDDDYANSVQSYAASEGQVD) is disordered. N-acetylserine is present on Ser2. At 2–508 (SSTDEHIEKD…RGFQRVKGDS (507 aa)) the chain is on the cytoplasmic side. 3 positions are modified to phosphoserine: Ser32, Ser52, and Ser56. The ABC transporter 1 domain maps to 144-397 (IPAHLISKFT…FQRMGWVKPN (254 aa)). Residue Lys426 forms a Glycyl lysine isopeptide (Lys-Gly) (interchain with G-Cter in ubiquitin) linkage. A helical membrane pass occupies residues 509–529 (TYTKVYLSSFLIKALIIGSMF). Residues 530–548 (HKIDDKSQSTTAGAYSRGG) lie on the Extracellular side of the membrane. Residues 549 to 569 (MLFYVLLFASVTSLAEIGNSF) form a helical membrane-spanning segment. The Cytoplasmic portion of the chain corresponds to 570–597 (SSRPVIVKHKSYSMYHLSAESLQEIITE). A helical transmembrane segment spans residues 598–618 (FPTKFVAIVILCLITYWIPFM). The Extracellular portion of the chain corresponds to 619–622 (KYEA). A helical transmembrane segment spans residues 623-643 (GAFFQYILYLLTVQQCTSFIF). Topologically, residues 644 to 657 (KFVATMSKSGVDAH) are cytoplasmic. Residues 658–678 (AVGGLWVLMLCVYAGFVLPIG) form a helical membrane-spanning segment. Residues 679–765 (EMHHWIRWLH…FAYKHAWRNW (87 aa)) are Extracellular-facing. A helical membrane pass occupies residues 766–786 (GVNIVWTFGYIVFNVILSEYL). At 787–1182 (KPVEGGGDLL…WRSPVYIRAK (396 aa)) the chain is on the cytoplasmic side. The ABC transporter 2 domain maps to 836–1084 (IAEKDVFTWN…TLLKYFERQS (249 aa)). ATP contacts are provided by residues 878 to 885 (GESGAGKT) and 972 to 979 (AEALVGKT). A helical membrane pass occupies residues 1183-1203 (FFECVACALFVGLSYVGVNHS). Val1204 is a topological domain (extracellular). A helical membrane pass occupies residues 1205–1225 (GGAIEAFSSIFMLLLIALAMI). Topologically, residues 1226-1254 (NQLHVFAYDSRELYEVREAASNTFHWSVL) are cytoplasmic. The chain crosses the membrane as a helical span at residues 1255 to 1275 (LLCHAAVENFWSTLCQFMCFI). Topologically, residues 1276 to 1291 (CYYWPAQFSGRASHAG) are extracellular. The chain crosses the membrane as a helical span at residues 1292-1312 (FFFFFYVLIFPLYFVTYGLWI). Residues 1313–1318 (LYMSPD) lie on the Cytoplasmic side of the membrane. A helical transmembrane segment spans residues 1319 to 1339 (VPSASMINSNLFAAMLLFCGI). Topologically, residues 1340-1444 (LQPREKMPAF…NVKWDHRWRN (105 aa)) are extracellular. Asn1405 carries N-linked (GlcNAc...) asparagine glycosylation. A helical membrane pass occupies residues 1445-1465 (FGFMWAYICFNIAAMLICYYV). Over 1466–1511 (VRVKVWSLKSVLNFKKWFNGPRKERHEKDTNIFQTVPGDENKITKK) the chain is Cytoplasmic.

It belongs to the ABC transporter superfamily. ABCG family. PDR (TC 3.A.1.205) subfamily.

The protein localises to the cell membrane. Functionally, plasma membrane transporter which mediates resistance to water-soluble, monocarboxylic acids with chain lengths of from C1 to C7 by active extrusion of the preservative anions from the cytosol. Also involved in the export of aromatic and branched-chain organic acids produced in amino acid catabolism. The chain is ATP-dependent permease PDR12 (PDR12) from Saccharomyces cerevisiae (strain ATCC 204508 / S288c) (Baker's yeast).